Consider the following 503-residue polypeptide: tRNA-guanine(15) transglycosylase (503 aa).

The active-site Nucleophile is the aspartate 86. Aspartate 121 is a substrate binding site. Zn(2+) is bound by residues cysteine 278, cysteine 280, and cysteine 283.

Belongs to the archaeosine tRNA-ribosyltransferase family. The cofactor is Zn(2+).

It catalyses the reaction guanosine(15) in tRNA + 7-cyano-7-deazaguanine = 7-cyano-7-carbaguanosine(15) in tRNA + guanine. It participates in tRNA modification; archaeosine-tRNA biosynthesis. Functionally, exchanges the guanine residue with 7-cyano-7-deazaguanine (preQ0) at position 15 in the dihydrouridine loop (D-loop) of archaeal tRNAs. In Saccharolobus solfataricus (strain ATCC 35092 / DSM 1617 / JCM 11322 / P2) (Sulfolobus solfataricus), this protein is tRNA-guanine(15) transglycosylase.